We begin with the raw amino-acid sequence, 499 residues long: GTPase Der (499 aa).

The EngA-type G 1 domain maps to 3–166 (PVIALVGRPN…QALGIFPKDN (164 aa)). Residues 9 to 16 (GRPNVGKS), 56 to 60 (DTGGI), and 118 to 121 (NKVD) contribute to the GTP site. Residues 166–199 (NADENAEGEEGGELAEGEEVVAEGQEPKRIPGPS) form a disordered region. Over residues 168 to 186 (DENAEGEEGGELAEGEEVV) the composition is skewed to acidic residues. Over residues 190-199 (QEPKRIPGPS) the composition is skewed to basic and acidic residues. An EngA-type G 2 domain is found at 204 to 377 (IKIAIIGRPN…SVQAAFKSAI (174 aa)). GTP contacts are provided by residues 210 to 217 (GRPNVGKS), 257 to 261 (DTAGV), and 322 to 325 (NKWD). In terms of domain architecture, KH-like spans 378-462 (TRWPTSRLTQ…PIRIEYKGGD (85 aa)). The span at 459-472 (KGGDNPYEGKKNTL) shows a compositional bias: basic and acidic residues. Residues 459–499 (KGGDNPYEGKKNTLTDRQVNKKRRLMSHHKKAEKKRRDKKR) form a disordered region. The span at 478–499 (NKKRRLMSHHKKAEKKRRDKKR) shows a compositional bias: basic residues.

It belongs to the TRAFAC class TrmE-Era-EngA-EngB-Septin-like GTPase superfamily. EngA (Der) GTPase family. In terms of assembly, associates with the 50S ribosomal subunit.

GTPase that plays an essential role in the late steps of ribosome biogenesis. This Stutzerimonas stutzeri (strain A1501) (Pseudomonas stutzeri) protein is GTPase Der.